The primary structure comprises 205 residues: Large ribosomal subunit protein uL4 (205 aa).

Residues 43–97 (GKRQGTSKVKNRSAVRGGGKKPWRQKGTGRARQGSIRAPQWRGGGTVFGPTPRSY) are disordered. The span at 51–71 (VKNRSAVRGGGKKPWRQKGTG) shows a compositional bias: basic residues.

The protein belongs to the universal ribosomal protein uL4 family. Part of the 50S ribosomal subunit.

One of the primary rRNA binding proteins, this protein initially binds near the 5'-end of the 23S rRNA. It is important during the early stages of 50S assembly. It makes multiple contacts with different domains of the 23S rRNA in the assembled 50S subunit and ribosome. Its function is as follows. Forms part of the polypeptide exit tunnel. This Lactobacillus acidophilus (strain ATCC 700396 / NCK56 / N2 / NCFM) protein is Large ribosomal subunit protein uL4.